A 218-amino-acid polypeptide reads, in one-letter code: Methylthioribulose-1-phosphate dehydratase (218 aa).

Positions 107 and 109 each coordinate Zn(2+).

It belongs to the aldolase class II family. MtnB subfamily. Zn(2+) serves as cofactor.

The enzyme catalyses 5-(methylsulfanyl)-D-ribulose 1-phosphate = 5-methylsulfanyl-2,3-dioxopentyl phosphate + H2O. It functions in the pathway amino-acid biosynthesis; L-methionine biosynthesis via salvage pathway; L-methionine from S-methyl-5-thio-alpha-D-ribose 1-phosphate: step 2/6. Functionally, catalyzes the dehydration of methylthioribulose-1-phosphate (MTRu-1-P) into 2,3-diketo-5-methylthiopentyl-1-phosphate (DK-MTP-1-P). The chain is Methylthioribulose-1-phosphate dehydratase from Xylella fastidiosa (strain M12).